Consider the following 913-residue polypeptide: Valine--tRNA ligase (913 aa).

The 'HIGH' region signature appears at 48 to 58 (PNVTGSLHMGH). The short motif at 541 to 545 (KMSKS) is the 'KMSKS' region element. Lysine 544 provides a ligand contact to ATP. Residues 839–907 (VVDLEALVSK…IEHRLQSLGV (69 aa)) are a coiled coil.

The protein belongs to the class-I aminoacyl-tRNA synthetase family. ValS type 1 subfamily. Monomer.

Its subcellular location is the cytoplasm. The catalysed reaction is tRNA(Val) + L-valine + ATP = L-valyl-tRNA(Val) + AMP + diphosphate. Functionally, catalyzes the attachment of valine to tRNA(Val). As ValRS can inadvertently accommodate and process structurally similar amino acids such as threonine, to avoid such errors, it has a 'posttransfer' editing activity that hydrolyzes mischarged Thr-tRNA(Val) in a tRNA-dependent manner. The polypeptide is Valine--tRNA ligase (Thermosynechococcus vestitus (strain NIES-2133 / IAM M-273 / BP-1)).